We begin with the raw amino-acid sequence, 588 residues long: Oxidoreductase NdmD (588 aa).

Positions 9-114 constitute a Rieske domain; the sequence is WFPIATTEDL…VREKHGFIWT (106 aa). 4 residues coordinate [2Fe-2S] cluster: Cys-50, His-52, Cys-69, and His-72. Residues 272 to 373 form the FAD-binding FR-type domain; the sequence is PTHYICEVVT…TLPRNGFPLV (102 aa). Positions 503-588 constitute a 2Fe-2S ferredoxin-type domain; it reads YEVELKKTGQ…CKSKKIVLDL (86 aa). [2Fe-2S] cluster contacts are provided by Cys-537, Cys-542, Cys-545, and Cys-575.

[2Fe-2S] cluster serves as cofactor.

Its function is as follows. Involved in the caffeine degradation, which is the essential first step for assimilating the carbon and nitrogen in caffeine. Catalyzes the oxidation of NADH and transfers electrons to NdmA and NdmB, which catalyze the N-demethylation reactions. The sequence is that of Oxidoreductase NdmD (ndmD) from Pseudomonas putida (Arthrobacter siderocapsulatus).